A 232-amino-acid chain; its full sequence is Orotidine 5'-phosphate decarboxylase (232 aa).

Substrate is bound by residues Asp11, Lys33, 60–69, Thr119, Arg180, Gln189, Gly209, and Arg210; that span reads DLKFHDIPHT. Residue Lys62 is the Proton donor of the active site.

Belongs to the OMP decarboxylase family. Type 1 subfamily. Homodimer.

The enzyme catalyses orotidine 5'-phosphate + H(+) = UMP + CO2. It participates in pyrimidine metabolism; UMP biosynthesis via de novo pathway; UMP from orotate: step 2/2. In terms of biological role, catalyzes the decarboxylation of orotidine 5'-monophosphate (OMP) to uridine 5'-monophosphate (UMP). This is Orotidine 5'-phosphate decarboxylase from Nitrosococcus oceani (strain ATCC 19707 / BCRC 17464 / JCM 30415 / NCIMB 11848 / C-107).